A 274-amino-acid chain; its full sequence is 2,3,4,5-tetrahydropyridine-2,6-dicarboxylate N-succinyltransferase (274 aa).

Positions 104 and 141 each coordinate substrate.

It belongs to the transferase hexapeptide repeat family. As to quaternary structure, homotrimer.

It is found in the cytoplasm. The catalysed reaction is (S)-2,3,4,5-tetrahydrodipicolinate + succinyl-CoA + H2O = (S)-2-succinylamino-6-oxoheptanedioate + CoA. It participates in amino-acid biosynthesis; L-lysine biosynthesis via DAP pathway; LL-2,6-diaminopimelate from (S)-tetrahydrodipicolinate (succinylase route): step 1/3. The chain is 2,3,4,5-tetrahydropyridine-2,6-dicarboxylate N-succinyltransferase from Escherichia coli O127:H6 (strain E2348/69 / EPEC).